We begin with the raw amino-acid sequence, 625 residues long: Probable potassium transport system protein Kup (625 aa).

Helical transmembrane passes span 13–33 (TALAALGVVFGDIGTSPLYAL), 53–73 (ILSIIFWCLMLIISIKYVAIV), 103–123 (IYMIAIGFIGASLFFGDGIIT), 141–161 (VFDPFIMPIAIAIIVTLFLVQ), 172–192 (FGPITLVWFLSLGILGIHSVI), 206–226 (AIQFIYHHPIMTFFVMGAVVL), 250–270 (WFFVVLPCLVLNYAGQGALLL), 282–302 (LLVPQWALYPMIIMATMATVI), 340–360 (IYVPFLNWLLLIAIIILILIF), 369–389 (AYGLAVTLTMLCDTILVAVFI), 400–420 (VLILIIPFFILESVLVGATSL), and 422–442 (ILSGGWVPLLIGAIAVTILMT).

This sequence belongs to the HAK/KUP transporter (TC 2.A.72) family.

Its subcellular location is the cell inner membrane. The enzyme catalyses K(+)(in) + H(+)(in) = K(+)(out) + H(+)(out). In terms of biological role, transport of potassium into the cell. Likely operates as a K(+):H(+) symporter. The polypeptide is Probable potassium transport system protein Kup (Acinetobacter baumannii (strain SDF)).